The following is a 282-amino-acid chain: Stress response regulator protein 1 (282 aa).

Composition is skewed to low complexity over residues 12–30 and 45–58; these read NLSR…HSST and NSQS…SNNN. 3 disordered regions span residues 12–31, 43–84, and 112–139; these read NLSR…SSTV, DINS…DDED, and LTPF…TTVV. Residues 66–77 show a composition bias toward polar residues; sequence SDYNSYTHNQYY. Residues 125–139 show a composition bias toward low complexity; sequence SIISSKSSNKSTTVV. A Response regulatory domain is found at 155-273; the sequence is SFLIVDDNII…LDFMANSIDD (119 aa). At Asp206 the chain carries 4-aspartylphosphate.

Its function is as follows. Required for stress adaptation, morphogenesis and virulence. The polypeptide is Stress response regulator protein 1 (SRR1) (Candida albicans (strain SC5314 / ATCC MYA-2876) (Yeast)).